The primary structure comprises 386 residues: Phosphoglycerate kinase (386 aa).

Residues 21–23 (DLN), R36, 59–62 (HLGR), R113, and R146 each bind substrate. Residues K197, E314, and 340–343 (GGDT) each bind ATP.

The protein belongs to the phosphoglycerate kinase family. In terms of assembly, monomer.

Its subcellular location is the cytoplasm. The catalysed reaction is (2R)-3-phosphoglycerate + ATP = (2R)-3-phospho-glyceroyl phosphate + ADP. It functions in the pathway carbohydrate degradation; glycolysis; pyruvate from D-glyceraldehyde 3-phosphate: step 2/5. The protein is Phosphoglycerate kinase of Azotobacter vinelandii (strain DJ / ATCC BAA-1303).